Consider the following 299-residue polypeptide: MEHFDASLSTYFRAWLGPRDTRVEGWFLLDNYVPTLVCSILYLLIVWLGPKYMKTRQPFSCRGILVVYNLGLTLLSLYMFCELVTGVWEGQYNFFCQGTRSGGEADMKIIRVLWWYYFSKLIEFMDTFFFILRKNNHQITVLHVYHHASMLNIWWFVMNWVPCGHSYFGATLNSFIHVLMYSYYGLSSIPSMRPYLWWKKYITQGQLLQFVLTIIQTSCGVIWPCTFPLGWLYFQIGYMISLITLFTNFYIQTYNKKGVSRRREHQKDHQNGSVAAVNGHISSFSSLENNVKPRKQRKD.

At Met-1 the chain carries N-acetylmethionine. Helical transmembrane passes span 26-46 (WFLL…LLIV), 64-84 (ILVV…CELV), 112-132 (VLWW…FFIL), 139-158 (ITVL…WFVM), 168-187 (FGAT…YGLS), 205-225 (GQLL…IWPC), and 226-246 (TFPL…ITLF). A Phosphoserine modification is found at Ser-285.

It belongs to the ELO family. ELOVL5 subfamily. In terms of assembly, interacts with TECR.

Its subcellular location is the endoplasmic reticulum membrane. It is found in the cell projection. It localises to the dendrite. The catalysed reaction is a very-long-chain acyl-CoA + malonyl-CoA + H(+) = a very-long-chain 3-oxoacyl-CoA + CO2 + CoA. It catalyses the reaction (6Z,9Z,12Z)-octadecatrienoyl-CoA + malonyl-CoA + H(+) = (8Z,11Z,14Z)-3-oxoeicosatrienoyl-CoA + CO2 + CoA. The enzyme catalyses (9Z,12Z,15Z)-octadecatrienoyl-CoA + malonyl-CoA + H(+) = (11Z,14Z,17Z)-3-oxoeicosatrienoyl-CoA + CO2 + CoA. It carries out the reaction (9Z)-hexadecenoyl-CoA + malonyl-CoA + H(+) = 3-oxo-(11Z)-octadecenoyl-CoA + CO2 + CoA. The catalysed reaction is (9Z)-octadecenoyl-CoA + malonyl-CoA + H(+) = 3-oxo-(11Z)-eicosenoyl-CoA + CO2 + CoA. It catalyses the reaction (11Z)-octadecenoyl-CoA + malonyl-CoA + H(+) = 3-oxo-(13Z)-eicosenoyl-CoA + CO2 + CoA. The enzyme catalyses (9Z,12Z)-octadecadienoyl-CoA + malonyl-CoA + H(+) = (11Z,14Z)-3-oxoicosa-11,14-dienoyl-CoA + CO2 + CoA. It carries out the reaction (6Z,9Z,12Z,15Z)-octadecatetraenoyl-CoA + malonyl-CoA + H(+) = (8Z,11Z,14Z,17Z)-3-oxoicosatetraenoyl-CoA + CO2 + CoA. The catalysed reaction is (5Z,8Z,11Z,14Z)-eicosatetraenoyl-CoA + malonyl-CoA + H(+) = (7Z,10Z,13Z,16Z)-3-oxodocosatetraenoyl-CoA + CO2 + CoA. It catalyses the reaction (5Z,8Z,11Z,14Z,17Z)-eicosapentaenoyl-CoA + malonyl-CoA + H(+) = 3-oxo-(7Z,10Z,13Z,16Z,19Z)-docosapentaenoyl-CoA + CO2 + CoA. It participates in lipid metabolism; polyunsaturated fatty acid biosynthesis. Functionally, catalyzes the first and rate-limiting reaction of the four reactions that constitute the long-chain fatty acids elongation cycle. This endoplasmic reticulum-bound enzymatic process allows the addition of 2 carbons to the chain of long- and very long-chain fatty acids (VLCFAs) per cycle. Condensing enzyme that acts specifically toward polyunsaturated acyl-CoA with the higher activity toward C18:3(n-6) acyl-CoA. May participate in the production of monounsaturated and of polyunsaturated VLCFAs of different chain lengths that are involved in multiple biological processes as precursors of membrane lipids and lipid mediators. In conditions where the essential linoleic and alpha linoleic fatty acids are lacking it is also involved in the synthesis of Mead acid from oleic acid. In Bos taurus (Bovine), this protein is Very long chain fatty acid elongase 5.